Consider the following 460-residue polypeptide: Argininosuccinate lyase (460 aa).

The protein belongs to the lyase 1 family. Argininosuccinate lyase subfamily.

Its subcellular location is the cytoplasm. It carries out the reaction 2-(N(omega)-L-arginino)succinate = fumarate + L-arginine. It functions in the pathway amino-acid biosynthesis; L-arginine biosynthesis; L-arginine from L-ornithine and carbamoyl phosphate: step 3/3. This Streptococcus sanguinis (strain SK36) protein is Argininosuccinate lyase.